We begin with the raw amino-acid sequence, 430 residues long: Adenylosuccinate synthetase (430 aa).

Residues 12–18 (GDEGKGK) and 40–42 (GHT) each bind GTP. The active-site Proton acceptor is the D13. The Mg(2+) site is built by D13 and G40. IMP contacts are provided by residues 13-16 (DEGK), 38-41 (NAGH), T128, R142, Q223, T238, and R302. The Proton donor role is filled by H41. 298–304 (TTTGRPR) lines the substrate pocket. GTP is bound by residues R304, 330–332 (SID), and 412–414 (SVG).

It belongs to the adenylosuccinate synthetase family. As to quaternary structure, homodimer. The cofactor is Mg(2+).

It is found in the cytoplasm. The enzyme catalyses IMP + L-aspartate + GTP = N(6)-(1,2-dicarboxyethyl)-AMP + GDP + phosphate + 2 H(+). It participates in purine metabolism; AMP biosynthesis via de novo pathway; AMP from IMP: step 1/2. Plays an important role in the de novo pathway of purine nucleotide biosynthesis. Catalyzes the first committed step in the biosynthesis of AMP from IMP. This Streptococcus pyogenes serotype M4 (strain MGAS10750) protein is Adenylosuccinate synthetase.